Consider the following 251-residue polypeptide: Elongation factor Ts (251 aa).

The segment at 82–85 (TDFV) is involved in Mg(2+) ion dislocation from EF-Tu. The tract at residues 215–251 (QMGQKAPEPVAAAPQVEEKAPEPAAKDNPPAKGKKKK) is disordered. Low complexity predominate over residues 219 to 229 (KAPEPVAAAPQ). Over residues 230 to 239 (VEEKAPEPAA) the composition is skewed to basic and acidic residues.

Belongs to the EF-Ts family.

It is found in the cytoplasm. In terms of biological role, associates with the EF-Tu.GDP complex and induces the exchange of GDP to GTP. It remains bound to the aminoacyl-tRNA.EF-Tu.GTP complex up to the GTP hydrolysis stage on the ribosome. The sequence is that of Elongation factor Ts from Microcystis aeruginosa (strain NIES-843 / IAM M-2473).